Here is a 114-residue protein sequence, read N- to C-terminus: Beta-microseminoprotein (114 aa).

Residues 1-20 (MNVLLGSVVIFATFVTLCNA) form the signal peptide. Intrachain disulfides connect C22/C70, C38/C62, C57/C93, C60/C69, and C84/C107.

The protein belongs to the beta-microseminoprotein family. In terms of assembly, homodimer; Interacts with PI16. In terms of tissue distribution, strongly expressed in prostate, liver, kidney, breast and penis. Also expressed in pancreas, esophagus, stomach, deodenum, colon, trachea, lung, salivary glands and fallopian tube. PSP94 is expressed in lung and breast, whereas PSP57 is found in kidney and bladder.

The protein resides in the secreted. This Homo sapiens (Human) protein is Beta-microseminoprotein (MSMB).